The chain runs to 274 residues: Serine/threonine-protein kinase 1 (274 aa).

The Protein kinase domain maps to 17–265 (ARTALHLVNG…YEVIQKNTYW (249 aa)). Residues 23-31 (LVNGKFGKV) and Lys46 each bind ATP. Catalysis depends on Asp133, which acts as the Proton acceptor.

It belongs to the protein kinase superfamily. Ser/Thr protein kinase family.

The enzyme catalyses L-seryl-[protein] + ATP = O-phospho-L-seryl-[protein] + ADP + H(+). The catalysed reaction is L-threonyl-[protein] + ATP = O-phospho-L-threonyl-[protein] + ADP + H(+). Its function is as follows. In vitro, can phosphorylate histone H1. This Lymantria dispar multicapsid nuclear polyhedrosis virus (LdMNPV) protein is Serine/threonine-protein kinase 1 (PK1).